The chain runs to 669 residues: Glycerol uptake/efflux facilitator protein (669 aa).

Positions 1–16 (MSNPQKALNDFLSSES) are enriched in polar residues. 2 disordered regions span residues 1 to 99 (MSNP…TYVP) and 123 to 147 (QDIN…RGQT). Over 1-254 (MSNPQKALND…WSSVKNTYLK (254 aa)) the chain is Extracellular. A compositionally biased stretch (low complexity) spans 50–68 (NNNNNNNNNNNNSNNNNNG). The span at 72 to 81 (GNDDDYDYEM) shows a compositional bias: acidic residues. Polar residues-rich tracts occupy residues 87–99 (SPQS…TYVP) and 133–147 (PSAS…RGQT). Position 150 is a phosphoserine (Ser-150). The interval 167–215 (HTIPESHLSRRRSRSRATSNAGHSANTGATNGRTTGAQTNMESNESPRN) is disordered. Thr-168 carries the phosphothreonine modification. Residues 191–206 (ANTGATNGRTTGAQTN) show a composition bias toward low complexity. Phosphoserine is present on residues Ser-209 and Ser-212. Residues 255–275 (EFLAEFMGTMVMIIFGSAVVC) form a helical membrane-spanning segment. Topologically, residues 276–325 (QVNVAGKIQQDNFNVALDNLNVTGSSAETIDAMKSLTSLVSSVAGGTFDD) are cytoplasmic. The chain crosses the membrane as a helical span at residues 326–346 (VALGWAAAVVMGYFCAGGSAI). The Extracellular portion of the chain corresponds to 347–369 (SGAHLNPSITLANLVYRGFPLKK). The NPA 1 signature appears at 352-354 (NPS). The helical transmembrane segment at 370-390 (VPYYFAGQLIGAFTGALILFI) threads the bilayer. The Cytoplasmic portion of the chain corresponds to 391-446 (WYKRVLQEAYSDWWMNESVAGMFCVFPKPYLSSGRQFFSEFLCGAMLQAGTFALTD). The chain crosses the membrane as a helical span at residues 447–467 (PYTCLSSDVFPLMMFILIFII). At 468–506 (NASMAYQTGTAMNLARDLGPRLALYAVGFDHKMLWVHHH) the chain is on the extracellular side. The NPA 2 signature appears at 480-482 (NLA). Residues 507–527 (HFFWVPMVGPFIGALMGGLVY) form a helical membrane-spanning segment. Residues 528–669 (DVCIYQGHES…SHYGNAKKVT (142 aa)) lie on the Cytoplasmic side of the membrane. 2 disordered regions span residues 591–615 (LQKT…VQFK) and 635–669 (DSIE…KKVT). Polar residues predominate over residues 638 to 655 (ETASLGATTTDSIGLSDT).

This sequence belongs to the MIP/aquaporin (TC 1.A.8) family.

It is found in the membrane. In terms of biological role, channel protein for glycerol. Has a role in both glycerol influx and efflux. Plays a role in osmoregulation: under osmotic stress the channel is apparently closed to allow accumulation of glycerol in the cell under hyperosmotic conditions. This is Glycerol uptake/efflux facilitator protein (FPS1) from Saccharomyces cerevisiae (strain ATCC 204508 / S288c) (Baker's yeast).